A 404-amino-acid polypeptide reads, in one-letter code: Adenosylhomocysteinase (404 aa).

Residues Asp-114 and Glu-139 each contribute to the substrate site. Residue 140–142 coordinates NAD(+); that stretch reads TTT. Substrate contacts are provided by Lys-169 and Asp-173. Residues Asn-174, 203-208, Glu-226, Asn-261, 282-284, and Asn-329 contribute to the NAD(+) site; these read GYGWCG and AGH.

This sequence belongs to the adenosylhomocysteinase family. NAD(+) serves as cofactor.

Its subcellular location is the cytoplasm. It carries out the reaction S-adenosyl-L-homocysteine + H2O = L-homocysteine + adenosine. Its pathway is amino-acid biosynthesis; L-homocysteine biosynthesis; L-homocysteine from S-adenosyl-L-homocysteine: step 1/1. Its function is as follows. May play a key role in the regulation of the intracellular concentration of adenosylhomocysteine. The sequence is that of Adenosylhomocysteinase from Thermotoga maritima (strain ATCC 43589 / DSM 3109 / JCM 10099 / NBRC 100826 / MSB8).